The primary structure comprises 502 residues: NAD(P)H-quinone oxidoreductase chain 4, chloroplastic (502 aa).

Transmembrane regions (helical) follow at residues 4-24, 39-59, 89-109, 115-132, 136-156, 169-189, 209-229, 244-264, 276-296, 315-335, 387-407, 418-438, and 466-486; these read YPWL…IPLL, LGIC…HFDI, IGLT…AWPV, LFHS…GLFT, ILLF…LLSM, FILY…TMGL, IALE…KLPI, HYST…YGLI, SIFA…AASI, MGFV…GAIL, SLAL…PGIV, IIIT…LLSM, and IFIS…PNLI.

This sequence belongs to the complex I subunit 4 family.

Its subcellular location is the plastid. The protein resides in the chloroplast thylakoid membrane. It catalyses the reaction a plastoquinone + NADH + (n+1) H(+)(in) = a plastoquinol + NAD(+) + n H(+)(out). The catalysed reaction is a plastoquinone + NADPH + (n+1) H(+)(in) = a plastoquinol + NADP(+) + n H(+)(out). This is NAD(P)H-quinone oxidoreductase chain 4, chloroplastic from Huperzia lucidula (Shining clubmoss).